Reading from the N-terminus, the 599-residue chain is Elongation factor 4 (599 aa).

The region spanning 2–184 is the tr-type G domain; that stretch reads KNIRNFSIIA…RLVRDIPPPE (183 aa). GTP contacts are provided by residues 14–19 and 131–134; these read DHGKST and NKID.

The protein belongs to the TRAFAC class translation factor GTPase superfamily. Classic translation factor GTPase family. LepA subfamily.

It localises to the cell inner membrane. The enzyme catalyses GTP + H2O = GDP + phosphate + H(+). Functionally, required for accurate and efficient protein synthesis under certain stress conditions. May act as a fidelity factor of the translation reaction, by catalyzing a one-codon backward translocation of tRNAs on improperly translocated ribosomes. Back-translocation proceeds from a post-translocation (POST) complex to a pre-translocation (PRE) complex, thus giving elongation factor G a second chance to translocate the tRNAs correctly. Binds to ribosomes in a GTP-dependent manner. The sequence is that of Elongation factor 4 from Escherichia fergusonii (strain ATCC 35469 / DSM 13698 / CCUG 18766 / IAM 14443 / JCM 21226 / LMG 7866 / NBRC 102419 / NCTC 12128 / CDC 0568-73).